A 1073-amino-acid chain; its full sequence is Collagen alpha-2(I) chain (1073 aa).

The tract at residues 1-939 (APDPGPGPMG…PGPAGGGYDV (939 aa)) is disordered. Composition is skewed to low complexity over residues 100–148 (EPGA…AAGP), 178–187 (EPGPNGAVGP), and 194–215 (PGNNGLNGAKGAAGTPGVAGAP). A compositionally biased stretch (pro residues) spans 217 to 227 (FPGPRGGPGPQ). Residues 229 to 239 (PQGAAGQRGLA) show a composition bias toward low complexity. Positions 246–255 (GVKGDGGPKG) are enriched in gly residues. Low complexity-rich tracts occupy residues 296–315 (MPGARGATGAAGPRGPPGDA), 321–348 (SGPAGLRGLPGSPGSSGPPGKEGAAGPA), 386–399 (APGPDGNNGATGAT), and 411–423 (QGAAGAPGFQGLP). Residues 424–433 (GPAGGAGEAG) are compositionally biased toward gly residues. Over residues 458-468 (NPGAAGASGPQ) the composition is skewed to low complexity. Residues 481-508 (GTDGGKGEPGAAGAAGGPGHQGPGGMPG) are compositionally biased toward gly residues. Residues 519 to 530 (KGEKGEAGHRGP) are compositionally biased toward basic and acidic residues. Composition is skewed to low complexity over residues 561 to 575 (SGSFGPAGPAGARGA) and 584 to 597 (PAGAPGFAGPPGAD). Over residues 607–616 (GPSGGKGESG) the composition is skewed to gly residues. Composition is skewed to low complexity over residues 617–642 (PAGPAGPAGQSGPPGASGPAGPTGAR), 653–680 (FPGAAGRVGAAGPAGLVGPPGSAGPAGK), and 708–729 (SGEKGPSGPAGXPGXPGTSGPL). Over residues 745–757 (GSPGGAGGVGEPG) the composition is skewed to gly residues. Residues 758 to 774 (RVGPAGPAGARGNLGLP) show a composition bias toward low complexity. A compositionally biased stretch (gly residues) spans 811–820 (GESGPGGAAG). Over residues 821 to 836 (AVGPAGARGAAGPSGP) the composition is skewed to low complexity. The span at 837-851 (RGEKGVAGEKGERGL) shows a compositional bias: basic and acidic residues. 2 stretches are compositionally biased toward low complexity: residues 857-876 (LQGMPGPSGPSGDTGSAGPN) and 906-917 (PGARGPPGYVGP). Over residues 918–932 (AGPPGSPGLPGPPGP) the composition is skewed to pro residues. Positions 1039–1073 (RTNKPSRLPLLDLAPLDLGGADQEFGLDLGPVCFK) constitute a Fibrillar collagen NC1 domain.

It belongs to the fibrillar collagen family.

The protein resides in the secreted. It is found in the extracellular space. It localises to the extracellular matrix. The chain is Collagen alpha-2(I) chain from Epinephelus aeneus (White grouper).